A 154-amino-acid chain; its full sequence is PTTG1IP family member 2 (154 aa).

The first 26 residues, 1 to 26, serve as a signal peptide directing secretion; sequence MCWLRAWGQILLPVFLSLFLIQLLIS. At 27-97 the chain is on the extracellular side; the sequence is FSENGFIHSP…SIYWLNCKVD (71 aa). A helical transmembrane segment spans residues 98 to 118; that stretch reads MFGIMMLLLIAVLITGFVWYC. The Cytoplasmic segment spans residues 119-154; the sequence is CAYHFYLQDLNRNRVYFYGRRETVPIHDRSATVYDE.

It localises to the membrane. This is PTTG1IP family member 2 from Homo sapiens (Human).